The primary structure comprises 304 residues: MADYHNNYKKNDELEFVRTGYGKDMVKVLHIQRDGKYHSIKEVATSVQLTLSSKKDYLHGDNSDIIPTDTIKNTVHVLAKFKGIKSIEAFGVNICEYFLSSFNHVIRAQVYVEEIPWKRLEKNGVKHVHAFIHTPTGTHFCEVEQLRSGPPVIHSGTKDLKVLKTTQSGFEGFIKDQFTTLPEVKDRCFATQVYCKWRYHQCRDVDFEATWGTIRDLVLEKFAGPYDKGEYSPSVQKTLYDIQVLSLSRVPEIEDMEISLPNIHYFNIDMSKMGLINKEEVLLPLDNPYGKITGTVKRKLSSRL.

Alanine 2 bears the N-acetylalanine mark. An N6-acetyllysine; alternate mark is found at lysine 10 and lysine 23. 2 positions are modified to N6-succinyllysine; alternate: lysine 10 and lysine 23. The Charge relay system role is filled by lysine 23. An N6-acetyllysine mark is found at lysine 27 and lysine 36. 2 positions are modified to phosphoserine: serine 39 and serine 63. Threonine 68 acts as the Charge relay system in catalysis. 2 residues coordinate urate: threonine 68 and aspartate 69. An N6-acetyllysine mark is found at lysine 118, lysine 122, and lysine 164. Phenylalanine 170 contacts urate. An N6-acetyllysine mark is found at lysine 175 and lysine 185. A urate-binding site is contributed by arginine 187. N6-acetyllysine; alternate occurs at positions 221 and 228. N6-succinyllysine; alternate occurs at positions 221 and 228. Phosphoserine is present on serine 232. Valine 235, glutamine 236, and asparagine 262 together coordinate urate. The active-site Charge relay system is histidine 264. Lysine 278 is subject to N6-acetyllysine. Tyrosine 289 carries the phosphotyrosine modification. A Microbody targeting signal motif is present at residues 302-304 (SRL).

It belongs to the uricase family.

The protein resides in the peroxisome. The enzyme catalyses urate + O2 + H2O = 5-hydroxyisourate + H2O2. Its pathway is purine metabolism; urate degradation; (S)-allantoin from urate: step 1/3. Its function is as follows. Catalyzes the oxidation of uric acid to 5-hydroxyisourate, which is further processed to form (S)-allantoin. The polypeptide is Uricase (UOX) (Macaca mulatta (Rhesus macaque)).